The sequence spans 159 residues: Probable cyclic pyranopterin monophosphate synthase (159 aa).

Residues 75-77 (LCH) and 111-112 (ME) each bind substrate. Asp-126 is an active-site residue.

This sequence belongs to the MoaC family. In terms of assembly, homohexamer; trimer of dimers.

It catalyses the reaction (8S)-3',8-cyclo-7,8-dihydroguanosine 5'-triphosphate = cyclic pyranopterin phosphate + diphosphate. The protein operates within cofactor biosynthesis; molybdopterin biosynthesis. Catalyzes the conversion of (8S)-3',8-cyclo-7,8-dihydroguanosine 5'-triphosphate to cyclic pyranopterin monophosphate (cPMP). The sequence is that of Probable cyclic pyranopterin monophosphate synthase from Pyrococcus horikoshii (strain ATCC 700860 / DSM 12428 / JCM 9974 / NBRC 100139 / OT-3).